The following is a 383-amino-acid chain: uncharacterized protein (383 aa).

This sequence belongs to the peptidase M20 family.

This is an uncharacterized protein from Staphylococcus haemolyticus (strain JCSC1435).